Here is a 180-residue protein sequence, read N- to C-terminus: NADH-quinone oxidoreductase subunit I (180 aa).

2 consecutive 4Fe-4S ferredoxin-type domains span residues 50–80 (LTRD…LQKA) and 90–119 (EFFR…LTPD). Residues cysteine 60, cysteine 63, cysteine 66, cysteine 70, cysteine 99, cysteine 102, cysteine 105, and cysteine 109 each coordinate [4Fe-4S] cluster.

It belongs to the complex I 23 kDa subunit family. NDH-1 is composed of 13 different subunits. Subunits NuoA, H, J, K, L, M, N constitute the membrane sector of the complex. Requires [4Fe-4S] cluster as cofactor.

The protein localises to the cell inner membrane. The enzyme catalyses a quinone + NADH + 5 H(+)(in) = a quinol + NAD(+) + 4 H(+)(out). Functionally, NDH-1 shuttles electrons from NADH, via FMN and iron-sulfur (Fe-S) centers, to quinones in the respiratory chain. The immediate electron acceptor for the enzyme in this species is believed to be ubiquinone. Couples the redox reaction to proton translocation (for every two electrons transferred, four hydrogen ions are translocated across the cytoplasmic membrane), and thus conserves the redox energy in a proton gradient. The protein is NADH-quinone oxidoreductase subunit I of Pectobacterium atrosepticum (strain SCRI 1043 / ATCC BAA-672) (Erwinia carotovora subsp. atroseptica).